The chain runs to 802 residues: Aldehyde dehydrogenase family 16 member A1 (802 aa).

Belongs to the aldehyde dehydrogenase family. Interacts with SPG21.

The chain is Aldehyde dehydrogenase family 16 member A1 (Aldh16a1) from Mus musculus (Mouse).